A 1441-amino-acid chain; its full sequence is Actin cytoskeleton-regulatory complex protein PAN1 (1441 aa).

Polar residues predominate over residues methionine 1 to asparagine 23. Residues methionine 1–phenylalanine 150 form a disordered region. Residues glutamine 24 to glycine 38 show a composition bias toward low complexity. Polar residues-rich tracts occupy residues glycine 46–threonine 58 and proline 66–valine 87. A compositionally biased stretch (low complexity) spans methionine 97 to alanine 137. Positions aspartate 188–methionine 277 constitute an EH 1 domain. The 36-residue stretch at leucine 221–lysine 256 folds into the EF-hand 1 domain. The segment covering alanine 292–threonine 303 has biased composition (polar residues). Positions alanine 292–asparagine 316 are disordered. The EH 2 domain occupies glutamate 440–asparagine 529. The EF-hand 2 domain occupies leucine 473 to lysine 508. The disordered stretch occupies residues glycine 594 to leucine 622. Residues glycine 604–glutamate 621 show a composition bias toward polar residues. Coiled-coil stretches lie at residues serine 618–alanine 735 and lysine 791–glutamate 820. 2 disordered regions span residues glycine 824–tryptophan 845 and arginine 867–aspartate 1441. The segment covering alanine 891–proline 911 has biased composition (low complexity). Coiled coils occupy residues glutamate 956–alanine 997 and arginine 1028–aspartate 1143. A compositionally biased stretch (basic and acidic residues) spans arginine 961–glutamate 993. The segment covering glutamate 994–lysine 1008 has biased composition (low complexity). 2 stretches are compositionally biased toward basic and acidic residues: residues proline 1023–lysine 1098 and glutamate 1107–glutamate 1137. The span at leucine 1139–proline 1152 shows a compositional bias: acidic residues. Residues isoleucine 1155–glycine 1166 are compositionally biased toward polar residues. Pro residues-rich tracts occupy residues proline 1177 to serine 1189 and proline 1219 to proline 1236. The span at lysine 1262–aspartate 1272 shows a compositional bias: basic and acidic residues. Positions lysine 1273 to aspartate 1282 are enriched in acidic residues. A compositionally biased stretch (low complexity) spans serine 1313 to valine 1324. A compositionally biased stretch (pro residues) spans proline 1340–alanine 1402.

This sequence belongs to the PAN1 family. Component of the PAN1 actin cytoskeleton-regulatory complex.

The protein localises to the cell membrane. It is found in the endosome membrane. The protein resides in the cytoplasm. It localises to the cytoskeleton. Its subcellular location is the actin patch. Its function is as follows. Component of the PAN1 actin cytoskeleton-regulatory complex required for the internalization of endosomes during actin-coupled endocytosis. The complex links the site of endocytosis to the cell membrane-associated actin cytoskeleton. Mediates uptake of external molecules and vacuolar degradation of plasma membrane proteins. Plays a role in the proper organization of the cell membrane-associated actin cytoskeleton and promotes its destabilization. In Podospora anserina (strain S / ATCC MYA-4624 / DSM 980 / FGSC 10383) (Pleurage anserina), this protein is Actin cytoskeleton-regulatory complex protein PAN1 (PAN1).